We begin with the raw amino-acid sequence, 433 residues long: MLVFEILVVLAAIFLGVRLGGIAIGYAGGLGMIVLCLGLGLKPGSIPIDVILIIMSVIAAIAAMQVAGGLDYLVHLAEKLLRSQPKHITFLAPVVTYFMTLLAGTGHTAFSTLPVIAKVAKEQGVKPSVPLSIAVVASQIAITASPVSAAVVFMSGALEPLGVGYLQLLAICIPTTFIGCMITAFICNLFNTDLSKDPVYQERVAKGMVKLRGQTQYVAKPGAKLSVLIFLVGILAVVFYATAISKNVGLIQNPIVGRDSAIMMFMLTTATLIAMFAKIDTDAVLNASTFKSGMTACICVLGVAWLGDTFVSNHINDIKGFAGGILEGHPWMLAITLFFASMLLYSQAATAKALIPAAIALSVDPVTLIASFAAVSALFVLPTYPTLLAAVQMDDTGSTRIGKFVFNHPFIVPGVLAIGISVALGFIVAPILL.

11 helical membrane passes run leucine 19–leucine 39, valine 50–leucine 70, phenylalanine 90–phenylalanine 110, isoleucine 133–phenylalanine 153, leucine 166–isoleucine 186, leucine 225–serine 245, alanine 261–threonine 281, serine 292–serine 312, glycine 320–alanine 340, leucine 368–leucine 388, and isoleucine 411–isoleucine 431.

This sequence belongs to the DcuA/DcuB transporter (TC 2.A.13.1) family.

Its subcellular location is the cell inner membrane. In terms of biological role, responsible for the transport of C4-dicarboxylates. This is C4-dicarboxylate transporter DcuA (dcuA) from Wolinella succinogenes (strain ATCC 29543 / DSM 1740 / CCUG 13145 / JCM 31913 / LMG 7466 / NCTC 11488 / FDC 602W) (Vibrio succinogenes).